Reading from the N-terminus, the 122-residue chain is Large ribosomal subunit protein uL22 (122 aa).

Belongs to the universal ribosomal protein uL22 family. Part of the 50S ribosomal subunit.

Its function is as follows. This protein binds specifically to 23S rRNA; its binding is stimulated by other ribosomal proteins, e.g. L4, L17, and L20. It is important during the early stages of 50S assembly. It makes multiple contacts with different domains of the 23S rRNA in the assembled 50S subunit and ribosome. The globular domain of the protein is located near the polypeptide exit tunnel on the outside of the subunit, while an extended beta-hairpin is found that lines the wall of the exit tunnel in the center of the 70S ribosome. This Prochlorococcus marinus (strain MIT 9303) protein is Large ribosomal subunit protein uL22.